The chain runs to 897 residues: Alanine--tRNA ligase (897 aa).

Zn(2+) contacts are provided by H581, H585, C684, and H688.

It belongs to the class-II aminoacyl-tRNA synthetase family. Zn(2+) is required as a cofactor.

Its subcellular location is the cytoplasm. The catalysed reaction is tRNA(Ala) + L-alanine + ATP = L-alanyl-tRNA(Ala) + AMP + diphosphate. In terms of biological role, catalyzes the attachment of alanine to tRNA(Ala) in a two-step reaction: alanine is first activated by ATP to form Ala-AMP and then transferred to the acceptor end of tRNA(Ala). Also edits incorrectly charged Ser-tRNA(Ala) and Gly-tRNA(Ala) via its editing domain. In Mycobacterium sp. (strain JLS), this protein is Alanine--tRNA ligase.